Reading from the N-terminus, the 286-residue chain is 4-hydroxybenzoate octaprenyltransferase (286 aa).

7 helical membrane-spanning segments follow: residues 21–40, 96–116, 142–162, 167–187, 210–230, 235–255, and 266–286; these read GTLL…AGGM, LFVI…GLVV, FLGV…TGEV, WWLF…YAMV, QIIG…GWSA, LYGL…MLIF, and FLNN…DYLF.

This sequence belongs to the UbiA prenyltransferase family. Mg(2+) serves as cofactor.

The protein resides in the cell inner membrane. The catalysed reaction is all-trans-octaprenyl diphosphate + 4-hydroxybenzoate = 4-hydroxy-3-(all-trans-octaprenyl)benzoate + diphosphate. It participates in cofactor biosynthesis; ubiquinone biosynthesis. Catalyzes the prenylation of para-hydroxybenzoate (PHB) with an all-trans polyprenyl group. Mediates the second step in the final reaction sequence of ubiquinone-8 (UQ-8) biosynthesis, which is the condensation of the polyisoprenoid side chain with PHB, generating the first membrane-bound Q intermediate 3-octaprenyl-4-hydroxybenzoate. This chain is 4-hydroxybenzoate octaprenyltransferase, found in Shewanella sp. (strain MR-4).